The sequence spans 373 residues: Alginate lyase (373 aa).

The signal sequence occupies residues 1-25 (MRLPMQKLLIPTLLGLAMFAGSVNA). Substrate is bound by residues 66–67 (SK), 139–140 (HT), and Tyr-257.

Belongs to the polysaccharide lyase 5 family.

The protein localises to the periplasm. It carries out the reaction Eliminative cleavage of alginate to give oligosaccharides with 4-deoxy-alpha-L-erythro-hex-4-enuronosyl groups at their non-reducing ends and beta-D-mannuronate at their reducing end.. Catalyzes the depolymerization of alginate by cleaving the beta-1,4 glycosidic bond between two adjacent sugar residues via a beta-elimination mechanism. May serve to degrade mislocalized alginate that is trapped in the periplasmic space. The polypeptide is Alginate lyase (Pseudomonas fluorescens).